Consider the following 188-residue polypeptide: Probable nicotinate-nucleotide adenylyltransferase (188 aa).

This sequence belongs to the NadD family.

The enzyme catalyses nicotinate beta-D-ribonucleotide + ATP + H(+) = deamido-NAD(+) + diphosphate. It participates in cofactor biosynthesis; NAD(+) biosynthesis; deamido-NAD(+) from nicotinate D-ribonucleotide: step 1/1. Functionally, catalyzes the reversible adenylation of nicotinate mononucleotide (NaMN) to nicotinic acid adenine dinucleotide (NaAD). In Acholeplasma laidlawii (strain PG-8A), this protein is Probable nicotinate-nucleotide adenylyltransferase.